The chain runs to 885 residues: Leucine--tRNA ligase (885 aa).

The 'HIGH' region motif lies at 48 to 58; the sequence is PYPSGKLHMGH. A 'KMSKS' region motif is present at residues 639–643; the sequence is TMSKS. Lys-642 provides a ligand contact to ATP.

The protein belongs to the class-I aminoacyl-tRNA synthetase family.

The protein resides in the cytoplasm. The catalysed reaction is tRNA(Leu) + L-leucine + ATP = L-leucyl-tRNA(Leu) + AMP + diphosphate. This is Leucine--tRNA ligase from Bordetella avium (strain 197N).